The sequence spans 415 residues: MLQNTGKLAGCTIFITGASRGIGKAIALKAAQDGANVVIAAKTADPHPKLPGTIYTAAAEIEAAGGKALPCIVDVRDEKQINDAVEQAVEKFGGIDILVNNASAINLTGTLQTPMKKADLMLGINLRGTYLTSKLCIPHLLKSKNPHILNLSPPLNLNPIWFKNHTAYTIAKYGMSMCVLGMAEEFRGSIAVNALWPKTAIQTAAMDMLGGSEVGKQCRKVEIMADAAYAIFKQPTSFTGQFVIDEDILKKEGIKDFDVYAVEPGHPLLPDFFLDGQPEDLVKHMEAHGATPAFTTAKADPVAAGPVSEMFNTIRGIISPEMVKTTQGVYKFNLAGEHAGVWYLDLKNDAGSAGNGEPPVKADVVMSMDSEDFVKMFGGKLKPTMAFMSGKLTIKGDMGLAIKLEKMMAMMKSKL.

Residues 17–23 (GASRGIG), K42, and D74 contribute to the NADP(+) site. Y168 serves as the catalytic Proton acceptor. K172 is a binding site for NADP(+). In terms of domain architecture, SCP2 spans 304 to 412 (AGPVSEMFNT…KLEKMMAMMK (109 aa)).

It belongs to the short-chain dehydrogenases/reductases (SDR) family.

Its subcellular location is the peroxisome. It is found in the mitochondrion. Has apparently no steroid dehydrogenase activity. Might act as a metabolic regulator that affects systemic adaptation to nutritional cues. This chain is Hydroxysteroid dehydrogenase-like protein 2 (hsdl2), found in Danio rerio (Zebrafish).